We begin with the raw amino-acid sequence, 291 residues long: tRNA U34 carboxymethyltransferase (291 aa).

Carboxy-S-adenosyl-L-methionine contacts are provided by residues K61, W75, K80, G100, 122 to 124, 149 to 150, Y169, and R284; these read DPS and VE.

The protein belongs to the class I-like SAM-binding methyltransferase superfamily. CmoB family. As to quaternary structure, homotetramer.

It carries out the reaction carboxy-S-adenosyl-L-methionine + 5-hydroxyuridine(34) in tRNA = 5-carboxymethoxyuridine(34) in tRNA + S-adenosyl-L-homocysteine + H(+). Its function is as follows. Catalyzes carboxymethyl transfer from carboxy-S-adenosyl-L-methionine (Cx-SAM) to 5-hydroxyuridine (ho5U) to form 5-carboxymethoxyuridine (cmo5U) at position 34 in tRNAs. The chain is tRNA U34 carboxymethyltransferase from Campylobacter jejuni subsp. jejuni serotype O:23/36 (strain 81-176).